Reading from the N-terminus, the 326-residue chain is Aspartate--ammonia ligase (326 aa).

The protein belongs to the class-II aminoacyl-tRNA synthetase family. AsnA subfamily.

It is found in the cytoplasm. The catalysed reaction is L-aspartate + NH4(+) + ATP = L-asparagine + AMP + diphosphate + H(+). It functions in the pathway amino-acid biosynthesis; L-asparagine biosynthesis; L-asparagine from L-aspartate (ammonia route): step 1/1. The polypeptide is Aspartate--ammonia ligase (Malacoplasma penetrans (strain HF-2) (Mycoplasma penetrans)).